We begin with the raw amino-acid sequence, 333 residues long: tRNA dimethylallyltransferase (333 aa).

16 to 23 is a binding site for ATP; it reads GPTASGKT. A substrate-binding site is contributed by 18-23; sequence TASGKT. Interaction with substrate tRNA stretches follow at residues 41–44, 165–169, and 253–258; these read DSAL, QRISR, and RCVGYR.

This sequence belongs to the IPP transferase family. In terms of assembly, monomer. Requires Mg(2+) as cofactor.

It carries out the reaction adenosine(37) in tRNA + dimethylallyl diphosphate = N(6)-dimethylallyladenosine(37) in tRNA + diphosphate. In terms of biological role, catalyzes the transfer of a dimethylallyl group onto the adenine at position 37 in tRNAs that read codons beginning with uridine, leading to the formation of N6-(dimethylallyl)adenosine (i(6)A). The chain is tRNA dimethylallyltransferase from Polaromonas sp. (strain JS666 / ATCC BAA-500).